The following is a 280-amino-acid chain: 4-diphosphocytidyl-2-C-methyl-D-erythritol kinase (280 aa).

The active site involves K8. 91–101 (PVAAGLAGGST) is a binding site for ATP. The active site involves D133.

This sequence belongs to the GHMP kinase family. IspE subfamily.

It carries out the reaction 4-CDP-2-C-methyl-D-erythritol + ATP = 4-CDP-2-C-methyl-D-erythritol 2-phosphate + ADP + H(+). The protein operates within isoprenoid biosynthesis; isopentenyl diphosphate biosynthesis via DXP pathway; isopentenyl diphosphate from 1-deoxy-D-xylulose 5-phosphate: step 3/6. Its function is as follows. Catalyzes the phosphorylation of the position 2 hydroxy group of 4-diphosphocytidyl-2C-methyl-D-erythritol. The chain is 4-diphosphocytidyl-2-C-methyl-D-erythritol kinase from Clostridium botulinum (strain ATCC 19397 / Type A).